A 386-amino-acid chain; its full sequence is Histidinol-phosphate aminotransferase (386 aa).

Residues 1-11 (MMVRKSTASNR) are compositionally biased toward polar residues. The tract at residues 1 to 22 (MMVRKSTASNRRLQDKGDEEPV) is disordered. Residue K248 is modified to N6-(pyridoxal phosphate)lysine.

This sequence belongs to the class-II pyridoxal-phosphate-dependent aminotransferase family. Histidinol-phosphate aminotransferase subfamily. In terms of assembly, homodimer. The cofactor is pyridoxal 5'-phosphate.

The enzyme catalyses L-histidinol phosphate + 2-oxoglutarate = 3-(imidazol-4-yl)-2-oxopropyl phosphate + L-glutamate. It participates in amino-acid biosynthesis; L-histidine biosynthesis; L-histidine from 5-phospho-alpha-D-ribose 1-diphosphate: step 7/9. The protein is Histidinol-phosphate aminotransferase of Moorella thermoacetica (strain ATCC 39073 / JCM 9320).